We begin with the raw amino-acid sequence, 911 residues long: Chitin synthase G (911 aa).

Disordered regions lie at residues 1 to 66 (MAYQ…VSGY) and 107 to 138 (GRVA…GGLR). Residues 12–34 (PHYDDNGHRLQDLPHGSYEEEAS) show a composition bias toward basic and acidic residues. Over residues 54–66 (QHGSSTTRPVSGY) the composition is skewed to polar residues. Transmembrane regions (helical) follow at residues 579-599 (IFST…TTVI), 624-644 (IINT…FILA), 659-679 (SFVV…YLVV), 711-731 (IIII…FMYL), 840-860 (LVTF…SDGV), and 879-899 (ALLW…CWFL).

It belongs to the chitin synthase family. Class III subfamily.

The protein resides in the cell membrane. It carries out the reaction [(1-&gt;4)-N-acetyl-beta-D-glucosaminyl](n) + UDP-N-acetyl-alpha-D-glucosamine = [(1-&gt;4)-N-acetyl-beta-D-glucosaminyl](n+1) + UDP + H(+). Its function is as follows. Polymerizes chitin, a structural polymer of the cell wall and septum, by transferring the sugar moiety of UDP-GlcNAc to the non-reducing end of the growing chitin polymer. This is Chitin synthase G (chsG) from Aspergillus fumigatus (strain ATCC MYA-4609 / CBS 101355 / FGSC A1100 / Af293) (Neosartorya fumigata).